We begin with the raw amino-acid sequence, 579 residues long: YTH domain-containing family protein 2 (579 aa).

The disordered stretch occupies residues 1 to 45; that stretch reads MSASSLLEQRPKGQGNKVQNGSVHQKDGLNDDDFEPYLSPQARPN. Position 2 is an N-acetylserine (serine 2). Residues serine 2, serine 4, serine 5, serine 22, serine 39, and serine 196 each carry the phosphoserine modification. Positions 2 to 384 are localization to mRNA processing bodies (P-bodies); sequence SASSLLEQRP…QAGSGSTPSE (383 aa). The disordered stretch occupies residues 247–387; it reads AKQQPKLKTK…SGSTPSEPHP (141 aa). Polar residues predominate over residues 291-316; sequence ALVQNIGQPTQGSPQPVGQQANNSPP. The span at 337–349 shows a compositional bias: low complexity; the sequence is AQLSVQQQAAQPT. The residue at position 359 (serine 359) is a Phosphoserine. The span at 359–371 shows a compositional bias: gly residues; sequence SGFGHNGVDGNGV. Over residues 372–383 the composition is skewed to polar residues; the sequence is GQSQAGSGSTPS. The interval 385 to 579 is interaction with m6A-containing mRNAs; that stretch reads PHPVLEKLRS…VKKERQGRGK (195 aa). Phosphoserine is present on serine 394. The YTH domain occupies 410–544; that stretch reads GRVFIIKSYS…EKAKQVLKII (135 aa). RNA is bound by residues 416–418, aspartate 422, 432–433, asparagine 462, tryptophan 486, and tryptophan 491; these read KSY and WC.

It belongs to the YTHDF family. YTHDF2 subfamily. Interacts with CNOT1; interaction is direct and promotes recruitment of the CCR4-NOT complex. Interacts with YTHDF3. Interacts with RIDA/HRSP12; interaction leads to recruitment of the ribonuclease P/MRP complex. Post-translationally, ubiquitinated by the SCF(SKP2) complex, leading to its degradation. In terms of tissue distribution, highly expressed in induced pluripotent stem cells (iPSCs) and down-regulated during neural differentiation.

The protein localises to the cytoplasm. It is found in the cytosol. Its subcellular location is the P-body. It localises to the stress granule. The protein resides in the nucleus. Specifically recognizes and binds N6-methyladenosine (m6A)-containing RNAs, and regulates their stability. M6A is a modification present at internal sites of mRNAs and some non-coding RNAs and plays a role in mRNA stability and processing. Acts as a regulator of mRNA stability by promoting degradation of m6A-containing mRNAs via interaction with the CCR4-NOT and ribonuclease P/MRP complexes, depending on the context. The YTHDF paralogs (YTHDF1, YTHDF2 and YTHDF3) share m6A-containing mRNAs targets and act redundantly to mediate mRNA degradation and cellular differentiation. M6A-containing mRNAs containing a binding site for RIDA/HRSP12 (5'-GGUUC-3') are preferentially degraded by endoribonucleolytic cleavage: cooperative binding of RIDA/HRSP12 and YTHDF2 to transcripts leads to recruitment of the ribonuclease P/MRP complex. Other m6A-containing mRNAs undergo deadenylation via direct interaction between YTHDF2 and CNOT1, leading to recruitment of the CCR4-NOT and subsequent deadenylation of m6A-containing mRNAs. Required maternally to regulate oocyte maturation: probably acts by binding to m6A-containing mRNAs, thereby regulating maternal transcript dosage during oocyte maturation, which is essential for the competence of oocytes to sustain early zygotic development. Also required during spermatogenesis: regulates spermagonial adhesion by promoting degradation of m6A-containing transcripts coding for matrix metallopeptidases. Also involved in hematopoietic stem cells specification by binding to m6A-containing mRNAs, leading to promote their degradation. Also acts as a regulator of neural development by promoting m6A-dependent degradation of neural development-related mRNA targets. Inhibits neural specification of induced pluripotent stem cells by binding to methylated neural-specific mRNAs and promoting their degradation, thereby restraining neural differentiation. Regulates circadian regulation of hepatic lipid metabolism: acts by promoting m6A-dependent degradation of PPARA transcripts. Regulates the innate immune response to infection by inhibiting the type I interferon response: acts by binding to m6A-containing IFNB transcripts and promoting their degradation. May also act as a promoter of cap-independent mRNA translation following heat shock stress: upon stress, relocalizes to the nucleus and specifically binds mRNAs with some m6A methylation mark at their 5'-UTR, protecting demethylation of mRNAs by FTO, thereby promoting cap-independent mRNA translation. Regulates mitotic entry by promoting the phase-specific m6A-dependent degradation of WEE1 transcripts. Promotes formation of phase-separated membraneless compartments, such as P-bodies or stress granules, by undergoing liquid-liquid phase separation upon binding to mRNAs containing multiple m6A-modified residues: polymethylated mRNAs act as a multivalent scaffold for the binding of YTHDF proteins, juxtaposing their disordered regions and thereby leading to phase separation. The resulting mRNA-YTHDF complexes then partition into different endogenous phase-separated membraneless compartments, such as P-bodies, stress granules or neuronal RNA granules. May also recognize and bind RNAs modified by C5-methylcytosine (m5C) and act as a regulator of rRNA processing. In terms of biological role, (Microbial infection) Promotes viral gene expression and replication of polyomavirus SV40: acts by binding to N6-methyladenosine (m6A)-containing viral RNAs. Its function is as follows. (Microbial infection) Promotes viral gene expression and virion production of kaposis sarcoma-associated herpesvirus (KSHV) at some stage of the KSHV life cycle (in iSLK.219 and iSLK.BAC16 cells). Acts by binding to N6-methyladenosine (m6A)-containing viral RNAs. The sequence is that of YTH domain-containing family protein 2 from Homo sapiens (Human).